A 137-amino-acid chain; its full sequence is Small ribosomal subunit protein uS9 (137 aa).

A compositionally biased stretch (basic and acidic residues) spans 106-117; the sequence is KTEGYLTRDPRA. The interval 106-137 is disordered; sequence KTEGYLTRDPRAKERRKYGLRKARKAPQYSKR. A compositionally biased stretch (basic residues) spans 118–137; that stretch reads KERRKYGLRKARKAPQYSKR.

It belongs to the universal ribosomal protein uS9 family.

This is Small ribosomal subunit protein uS9 from Thermosynechococcus vestitus (strain NIES-2133 / IAM M-273 / BP-1).